A 729-amino-acid chain; its full sequence is Fatty acid oxidation complex subunit alpha (729 aa).

The segment at M1 to K189 is enoyl-CoA hydratase/isomerase. Residue D296 coordinates substrate. The tract at residues E311–A729 is 3-hydroxyacyl-CoA dehydrogenase. Residues M324, D343, V400–E402, K407, and S429 contribute to the NAD(+) site. The For 3-hydroxyacyl-CoA dehydrogenase activity role is filled by H450. Position 453 (N453) interacts with NAD(+). The substrate site is built by N500 and Y660. A disordered region spans residues R708 to A729.

This sequence in the N-terminal section; belongs to the enoyl-CoA hydratase/isomerase family. In the C-terminal section; belongs to the 3-hydroxyacyl-CoA dehydrogenase family. In terms of assembly, heterotetramer of two alpha chains (FadB) and two beta chains (FadA).

The enzyme catalyses a (3S)-3-hydroxyacyl-CoA + NAD(+) = a 3-oxoacyl-CoA + NADH + H(+). It catalyses the reaction a (3S)-3-hydroxyacyl-CoA = a (2E)-enoyl-CoA + H2O. The catalysed reaction is a 4-saturated-(3S)-3-hydroxyacyl-CoA = a (3E)-enoyl-CoA + H2O. It carries out the reaction (3S)-3-hydroxybutanoyl-CoA = (3R)-3-hydroxybutanoyl-CoA. The enzyme catalyses a (3Z)-enoyl-CoA = a 4-saturated (2E)-enoyl-CoA. It catalyses the reaction a (3E)-enoyl-CoA = a 4-saturated (2E)-enoyl-CoA. The protein operates within lipid metabolism; fatty acid beta-oxidation. Functionally, involved in the aerobic and anaerobic degradation of long-chain fatty acids via beta-oxidation cycle. Catalyzes the formation of 3-oxoacyl-CoA from enoyl-CoA via L-3-hydroxyacyl-CoA. It can also use D-3-hydroxyacyl-CoA and cis-3-enoyl-CoA as substrate. The sequence is that of Fatty acid oxidation complex subunit alpha from Escherichia coli O8 (strain IAI1).